The primary structure comprises 384 residues: Substance-K receptor (384 aa).

Over 1–32 (MGAHAIVTDANISSSLENNTTGITAFSMPGWQ) the chain is Extracellular. N-linked (GlcNAc...) asparagine glycosylation is found at Asn-11, Asn-18, and Asn-19. A helical transmembrane segment spans residues 33-56 (LALWATAYLVLVLVAVTGNATVIW). Topologically, residues 57–69 (IILAHQRMRTVTN) are cytoplasmic. A helical transmembrane segment spans residues 70–90 (YFIVNLALADLCMAAFNAAFN). Topologically, residues 91 to 107 (FVYASHNIWYFGRAFCH) are extracellular. Cys-106 and Cys-181 are disulfide-bonded. The helical transmembrane segment at 108–129 (FQNLFPITAMFVSIYSMTAIAA) threads the bilayer. Residues 130–149 (DRYVAIVHPFQPRLSAPGTR) lie on the Cytoplasmic side of the membrane. A helical membrane pass occupies residues 150–170 (AVIAGIWLLALALAFPQCFYS). Over 171–196 (TITMDQGATKCVVVWPEDNGSKMLLL) the chain is Extracellular. A helical transmembrane segment spans residues 197 to 218 (YHLVVIALIYVLPLLVMLLAYS). Residues 219-251 (VIGLTLWRREVPRHQVHGASLRHLRAKKKFVKT) are Cytoplasmic-facing. The chain crosses the membrane as a helical span at residues 252 to 272 (MVLVVVTFAICWLPYHFYFIL). Topologically, residues 273–290 (GSFQEDIYYHKFIQQVYL) are extracellular. The chain crosses the membrane as a helical span at residues 291 to 310 (ALFWLAMSSTMYNPIIYCCL). At 311–384 (NHRFRSGFRL…GPQDGLPDEP (74 aa)) the chain is on the cytoplasmic side. A lipid anchor (S-palmitoyl cysteine) is attached at Cys-324.

It belongs to the G-protein coupled receptor 1 family.

The protein localises to the cell membrane. Functionally, this is a receptor for the tachykinin neuropeptide substance K (neurokinin A). It is associated with G proteins that activate a phosphatidylinositol-calcium second messenger system. This chain is Substance-K receptor (TACR2), found in Canis lupus familiaris (Dog).